The sequence spans 266 residues: Probable carboxylesterase Os04g0669500 (266 aa).

Active-site charge relay system residues include Ser-154, Asp-208, and His-240.

This sequence belongs to the AB hydrolase superfamily. AB hydrolase 2 family.

Its function is as follows. Possesses carboxylesterase activity in vitro. The polypeptide is Probable carboxylesterase Os04g0669500 (Oryza sativa subsp. japonica (Rice)).